Here is a 282-residue protein sequence, read N- to C-terminus: NH(3)-dependent NAD(+) synthetase (282 aa).

51 to 58 (GISGGVDS) serves as a coordination point for ATP. D57 provides a ligand contact to Mg(2+). Residue R148 coordinates deamido-NAD(+). T168 serves as a coordination point for ATP. Mg(2+) is bound at residue E173. Deamido-NAD(+)-binding residues include K181 and D188. ATP contacts are provided by K197 and T219. Position 268 to 269 (268 to 269 (HK)) interacts with deamido-NAD(+).

It belongs to the NAD synthetase family. Homodimer.

The catalysed reaction is deamido-NAD(+) + NH4(+) + ATP = AMP + diphosphate + NAD(+) + H(+). The protein operates within cofactor biosynthesis; NAD(+) biosynthesis; NAD(+) from deamido-NAD(+) (ammonia route): step 1/1. Its function is as follows. Catalyzes the ATP-dependent amidation of deamido-NAD to form NAD. Uses ammonia as a nitrogen source. The sequence is that of NH(3)-dependent NAD(+) synthetase from Burkholderia cenocepacia (strain ATCC BAA-245 / DSM 16553 / LMG 16656 / NCTC 13227 / J2315 / CF5610) (Burkholderia cepacia (strain J2315)).